The sequence spans 712 residues: MKPEAHIEDIEFVPDRSLSLETGRIAKQADGSVVARLGDTMVLSTATLSDSVNESNFFPLTVDYREKFAAGGKVPGGFIKREGRPTDKETLTSRLIDRAIRPLFPDGFYHDVHVVNFVISAGQDFDADVIAGVGSSAALMLSGAPFAGPFAEVRVGRVDGDYIVNPTMQQTEESDIDLVVAGKEDALVMVEGEAEEISEESMIEALDVAHRSIRRLCEGQHRLVEQAGEPDPFEWEADRVPEQLVQRMREEYGPKVADHIHGPYSKETFHGGIGDLKDQAVDDVLGDASETPEGYTASDIRDAIGEVEKGEMRNMIVEEGKRIDGRDQTDVRDLWMEVGYLPRVHGSAIFTRGETQVLGSITLGTSDDVQPVDEVFADTDKSFYLHYRFPPFSVGEASYLRGPKRREIGHSMLAERALRPVIPEQDEFPYTIRINADVMESNGSSSMASVCAGSLALMDAGVPIEKPVAGIAMGLVQEDDETTVLTDILGQEDHLGDMDFKLTGTRDGITACQMDMKIEGLSRDVMLKALKQSRDARHHILDRMEETIAEPRAELSSHAPRLTKLTIDPDRIGAVIGPGGKVVKSVQEETNTEITVEEEEGVGIVTIAATNQRDAEAAIERIKQIVAVPEEGEDYVGTVKGIRDFGAFVEIMPEKTGLLHVSEIDYDYVENVEDYLEVGDKVKVHLLEVHDDGKMRLTRKPFVSEENGEQNE.

Aspartate 493 and aspartate 499 together coordinate Mg(2+). The region spanning proline 560–isoleucine 622 is the KH domain. Residues glycine 632–lysine 700 enclose the S1 motif domain.

It belongs to the polyribonucleotide nucleotidyltransferase family. The cofactor is Mg(2+).

The protein localises to the cytoplasm. The enzyme catalyses RNA(n+1) + phosphate = RNA(n) + a ribonucleoside 5'-diphosphate. Its function is as follows. Involved in mRNA degradation. Catalyzes the phosphorolysis of single-stranded polyribonucleotides processively in the 3'- to 5'-direction. This Salinibacter ruber (strain DSM 13855 / M31) protein is Polyribonucleotide nucleotidyltransferase.